The following is a 210-amino-acid chain: Outer-membrane lipoprotein LolB (210 aa).

A signal peptide spans 1–29 (MSLISNNEERSLRVRYCIAIALSALLISG). Cys30 carries N-palmitoyl cysteine lipidation. Cys30 carries S-diacylglycerol cysteine lipidation.

It belongs to the LolB family. In terms of assembly, monomer.

The protein localises to the cell outer membrane. In terms of biological role, plays a critical role in the incorporation of lipoproteins in the outer membrane after they are released by the LolA protein. The polypeptide is Outer-membrane lipoprotein LolB (Coxiella burnetii (strain RSA 493 / Nine Mile phase I)).